Reading from the N-terminus, the 338-residue chain is Solute carrier family 35 member G5 (338 aa).

The interval 1-28 (MAGSHPYFNLPDSTHPSPPSGPPSLRWH) is disordered. A run of 9 helical transmembrane segments spans residues 37-57 (TNGLLVALLGGGLPAGFVGPL), 67-87 (LPSLELLICRCLFHLPIALLL), 105-125 (CFCALLNVLSIGCAYSAVQVV), 160-180 (CGLLGSILGLIIIVGPGLWTL), 190-210 (ALGYVQAFLGGLALSLGLLVY), 221-241 (TVAFLSGLVGLLGSVPGLFVL), 250-270 (LLSWSCVGAVGILTLVSFTCV), 281-301 (LVCAVLHSEVVVALILQYYML), and 310-330 (IMGAGVVLGNITIIPAWNLSC). Residues 49–174 (LPAGFVGPLS…SILGLIIIVG (126 aa)) form the EamA 1 domain. Residues 272-325 (YAVTKAHPALVCAVLHSEVVVALILQYYMLPETVAPSDIMGAGVVLGNITIIPA) form the EamA 2 domain.

This sequence belongs to the SLC35G solute transporter family.

It localises to the membrane. In Gorilla gorilla gorilla (Western lowland gorilla), this protein is Solute carrier family 35 member G5 (SLC35G5).